We begin with the raw amino-acid sequence, 521 residues long: Cytochrome P450 monooxygenase ARMGADRAFT_1018420 (521 aa).

Residues 9 to 26 (VSPIWILTAIVVVAYTTV) form a helical membrane-spanning segment. Residue cysteine 443 participates in heme binding. Asparagine 450 carries N-linked (GlcNAc...) asparagine glycosylation.

Belongs to the cytochrome P450 family. Requires heme as cofactor.

The protein localises to the membrane. It functions in the pathway secondary metabolite biosynthesis. Cytochrome P450 monooxygenase, part of the gene cluster that mediates the biosynthesis of melleolides, a range of antifungal and phytotoxic polyketide derivatives composed of an orsellinic acid (OA) moiety esterified to various sesquiterpene alcohols. The first step in melleolides biosynthesis is performed by the delta(6)-protoilludene synthase PRO1 which catalyzes the cyclization of farnesyl diphosphate to protoilludene. The orsellinic acid synthase armB produces OA by condensing acetyl-CoA with 3 malonyl-CoA units in a three-round chain elongation reaction folowed by a C2-C7 ring closure. ArmB further catalyzes the trans-esterification of OA to the various sesquiterpene alcohols resulting from the hydroxylation of protoilludene. The melleolides cluster also includes 5 cytochrome P450 monooxygenases, 4 NAD(+)-dependent oxidoreductases, one flavin-dependent oxidoreductase, and one O-methyltransferase. The cytochrome P450 monooxygenases may be involved in protoilludene hydroxylation to elaborate melleolides with multiple alcohol groups, such as melleolide D, which carries alcohol functionalities at C-4, C-5, C-10, and C-13. The role of the NAD(+)-dependent enzymes remains unknown. Numerous melleolides, including arnamial, show 5'-O-methylation of the aromatic moiety which may be catalyzed by the methyltransferase encoded in the cluster. The flavin-dependent oxidoreductase might represent the dehydrogenase yielding the aldehyde in position 1 of arnamial and other melleolides. Finally, several halogenase localized outside of the cluster, are able to catalyze the transfer of a single chlorine atom to the melleolide backbone, resulting in a 6'-chloromelleolide product. This is Cytochrome P450 monooxygenase ARMGADRAFT_1018420 from Armillaria gallica (Bulbous honey fungus).